We begin with the raw amino-acid sequence, 417 residues long: D-amino acid dehydrogenase (417 aa).

An FAD-binding site is contributed by 3 to 17 (IVVLGGGVVGVTSAW).

Belongs to the DadA oxidoreductase family. FAD is required as a cofactor.

It catalyses the reaction a D-alpha-amino acid + A + H2O = a 2-oxocarboxylate + AH2 + NH4(+). It functions in the pathway amino-acid degradation; D-alanine degradation; NH(3) and pyruvate from D-alanine: step 1/1. In terms of biological role, oxidative deamination of D-amino acids. This is D-amino acid dehydrogenase from Aeromonas salmonicida (strain A449).